A 141-amino-acid chain; its full sequence is Probable trafficking protein particle complex subunit 2 (141 aa).

Belongs to the TRAPP small subunits family. Sedlin subfamily. In terms of assembly, part of the multisubunit TRAPP (transport protein particle) complex.

It localises to the cytoplasm. The protein resides in the perinuclear region. Its subcellular location is the endoplasmic reticulum. The protein localises to the golgi apparatus. In terms of biological role, may play a role in vesicular transport from endoplasmic reticulum to Golgi. Required for the systemic spread of the RNAi response. In Caenorhabditis elegans, this protein is Probable trafficking protein particle complex subunit 2 (sedl-1).